Consider the following 1026-residue polypeptide: DNA polymerase catalytic subunit (1026 aa).

Residues L664–L695 are a coiled coil.

It belongs to the DNA polymerase type-B family.

It is found in the host nucleus. It carries out the reaction DNA(n) + a 2'-deoxyribonucleoside 5'-triphosphate = DNA(n+1) + diphosphate. Replicates viral genomic DNA. The polypeptide is DNA polymerase catalytic subunit (9) (Alcelaphine herpesvirus 1 (strain C500) (AlHV-1)).